A 471-amino-acid polypeptide reads, in one-letter code: Putative ABC transporter ATP-binding protein STK_11360 (471 aa).

ABC transporter domains follow at residues 4–241 (LEIK…LEPL) and 255–470 (VILE…VIKD). ATP contacts are provided by residues 37–44 (GKSGSGKS) and 286–293 (GDNGSGKS).

It belongs to the ABC transporter superfamily.

It is found in the cell membrane. In terms of biological role, probably part of an ABC transporter complex. Responsible for energy coupling to the transport system. This Sulfurisphaera tokodaii (strain DSM 16993 / JCM 10545 / NBRC 100140 / 7) (Sulfolobus tokodaii) protein is Putative ABC transporter ATP-binding protein STK_11360.